Reading from the N-terminus, the 194-residue chain is IMP cyclohydrolase (194 aa).

This sequence belongs to the archaeal IMP cyclohydrolase family.

The catalysed reaction is IMP + H2O = 5-formamido-1-(5-phospho-D-ribosyl)imidazole-4-carboxamide. It functions in the pathway purine metabolism; IMP biosynthesis via de novo pathway; IMP from 5-formamido-1-(5-phospho-D-ribosyl)imidazole-4-carboxamide: step 1/1. In terms of biological role, catalyzes the cyclization of 5-formylamidoimidazole-4-carboxamide ribonucleotide to IMP. In Halobacterium salinarum (strain ATCC 29341 / DSM 671 / R1), this protein is IMP cyclohydrolase.